The following is a 360-amino-acid chain: Phospho-N-acetylmuramoyl-pentapeptide-transferase (360 aa).

10 helical membrane passes run 19–39 (LTYLTSRIILGALTALLLSIF), 73–93 (TMGGALIIFSITVSMLCWADL), 95–115 (SVYTWLALFVLLGFGAVGWTD), 136–156 (YLSLVALLTALWLYFLADTPI), 173–193 (GILFIPFVYLVLTGASNAVNL), 199–219 (GLAIMPVVLVSGGLCIFAYLS), 233–253 (IAGAGEMAIFCAAIAGAGLGF), 263–283 (VFMGDVGALSLGAALATVAVV), 288–308 (LAFAVMGGVFVAEALSVMIQV), and 338–358 (VTIRFWIITVVLVLVGLSTLK).

This sequence belongs to the glycosyltransferase 4 family. MraY subfamily. Requires Mg(2+) as cofactor.

It is found in the cell inner membrane. It carries out the reaction UDP-N-acetyl-alpha-D-muramoyl-L-alanyl-gamma-D-glutamyl-meso-2,6-diaminopimeloyl-D-alanyl-D-alanine + di-trans,octa-cis-undecaprenyl phosphate = di-trans,octa-cis-undecaprenyl diphospho-N-acetyl-alpha-D-muramoyl-L-alanyl-D-glutamyl-meso-2,6-diaminopimeloyl-D-alanyl-D-alanine + UMP. Its pathway is cell wall biogenesis; peptidoglycan biosynthesis. In terms of biological role, catalyzes the initial step of the lipid cycle reactions in the biosynthesis of the cell wall peptidoglycan: transfers peptidoglycan precursor phospho-MurNAc-pentapeptide from UDP-MurNAc-pentapeptide onto the lipid carrier undecaprenyl phosphate, yielding undecaprenyl-pyrophosphoryl-MurNAc-pentapeptide, known as lipid I. This Dichelobacter nodosus (strain VCS1703A) protein is Phospho-N-acetylmuramoyl-pentapeptide-transferase.